Consider the following 913-residue polypeptide: Chitin synthase 1 (913 aa).

A disordered region spans residues 1–27; that stretch reads MSGAPPPSSGFAPRSYGQQPLSHAPRS. 3 residues coordinate UDP-N-acetyl-alpha-D-glucosamine: threonine 237, glutamate 241, and aspartate 291. Asparagine 420 carries N-linked (GlcNAc...) asparagine glycosylation. The active site involves aspartate 496. Asparagine 510 carries an N-linked (GlcNAc...) asparagine glycan. A run of 6 helical transmembrane segments spans residues 539–559, 581–601, 625–645, 658–678, 684–704, and 711–731; these read WLNG…RIYS, YTAF…FIVF, AVYI…IIGL, FVGA…AGIF, TVHS…ASAL, and IFMT…IFTI. The Conserved SWG motif signature appears at 741-743; that stretch reads SWG. 2 consecutive transmembrane segments (helical) span residues 800-820 and 825-845; these read VLLT…YFAS and MPVL…GSIG. Residues asparagine 867 and asparagine 900 are each glycosylated (N-linked (GlcNAc...) asparagine).

This sequence belongs to the chitin synthase family. Class II subfamily. As to quaternary structure, homodimer. Mn(2+) serves as cofactor.

The protein resides in the cell membrane. The catalysed reaction is [(1-&gt;4)-N-acetyl-beta-D-glucosaminyl](n) + UDP-N-acetyl-alpha-D-glucosamine = [(1-&gt;4)-N-acetyl-beta-D-glucosaminyl](n+1) + UDP + H(+). The activity is inhibited by nikkomycin Z (NikZ). Polymerizes chitin, a structural polymer of the cell wall and septum, by transferring the sugar moiety of UDP-GlcNAc to the non-reducing end of the growing chitin polymer. Involved in mycelial growth, sporangial production, zoospore release and pathogenesis. This Phytophthora sojae (strain P6497) (Soybean stem and root rot agent) protein is Chitin synthase 1.